Consider the following 151-residue polypeptide: Deoxyuridine 5'-triphosphate nucleotidohydrolase (151 aa).

Residues 70–72 (RSG), asparagine 83, 87–89 (LID), and methionine 97 contribute to the substrate site.

Belongs to the dUTPase family. Mg(2+) serves as cofactor.

It catalyses the reaction dUTP + H2O = dUMP + diphosphate + H(+). Its pathway is pyrimidine metabolism; dUMP biosynthesis; dUMP from dCTP (dUTP route): step 2/2. This enzyme is involved in nucleotide metabolism: it produces dUMP, the immediate precursor of thymidine nucleotides and it decreases the intracellular concentration of dUTP so that uracil cannot be incorporated into DNA. The chain is Deoxyuridine 5'-triphosphate nucleotidohydrolase from Salmonella enteritidis PT4 (strain P125109).